The following is a 350-amino-acid chain: Ion-translocating oxidoreductase complex subunit D (350 aa).

Transmembrane regions (helical) follow at residues 15-35, 36-56, 67-87, 88-108, and 122-142; these read QTQT…LAQT, WFFG…ALGA, PIKP…IGLS, LPPL…IIIA, and PAMV…TSWL. The residue at position 186 (threonine 186) is an FMN phosphoryl threonine. Helical transmembrane passes span 213–233, 242–262, 264–284, and 299–316; these read WGGI…LFLL, IPGA…LMTP, ATAT…AFFI, and LVYG…RRFG.

It belongs to the NqrB/RnfD family. In terms of assembly, the complex is composed of six subunits: RnfA, RnfB, RnfC, RnfD, RnfE and RnfG. Requires FMN as cofactor.

The protein resides in the cell inner membrane. Functionally, part of a membrane-bound complex that couples electron transfer with translocation of ions across the membrane. The protein is Ion-translocating oxidoreductase complex subunit D of Aeromonas salmonicida (strain A449).